Here is a 164-residue protein sequence, read N- to C-terminus: Large ribosomal subunit protein uL10 (164 aa).

This sequence belongs to the universal ribosomal protein uL10 family. As to quaternary structure, part of the ribosomal stalk of the 50S ribosomal subunit. The N-terminus interacts with L11 and the large rRNA to form the base of the stalk. The C-terminus forms an elongated spine to which L12 dimers bind in a sequential fashion forming a multimeric L10(L12)X complex.

Functionally, forms part of the ribosomal stalk, playing a central role in the interaction of the ribosome with GTP-bound translation factors. The protein is Large ribosomal subunit protein uL10 of Helicobacter pylori (strain P12).